We begin with the raw amino-acid sequence, 206 residues long: Large ribosomal subunit protein uL4 (206 aa).

Basic residues predominate over residues 66–77; the sequence is QKGTGRARHHSA. The segment at 66–96 is disordered; it reads QKGTGRARHHSARAPQFRGGGQAHGPVVRSH.

The protein belongs to the universal ribosomal protein uL4 family. In terms of assembly, part of the 50S ribosomal subunit.

In terms of biological role, one of the primary rRNA binding proteins, this protein initially binds near the 5'-end of the 23S rRNA. It is important during the early stages of 50S assembly. It makes multiple contacts with different domains of the 23S rRNA in the assembled 50S subunit and ribosome. Functionally, forms part of the polypeptide exit tunnel. The polypeptide is Large ribosomal subunit protein uL4 (Brucella anthropi (strain ATCC 49188 / DSM 6882 / CCUG 24695 / JCM 21032 / LMG 3331 / NBRC 15819 / NCTC 12168 / Alc 37) (Ochrobactrum anthropi)).